Consider the following 187-residue polypeptide: UPF0301 protein LPC_2717 (187 aa).

Belongs to the UPF0301 (AlgH) family.

The sequence is that of UPF0301 protein LPC_2717 from Legionella pneumophila (strain Corby).